The chain runs to 922 residues: Histidine kinase 5 (922 aa).

Coiled coils occupy residues 86–120 (MQDNAVRLLKEELKNLDRQREEAEAKELKIIEEYK) and 169–205 (KQKALSLEKMLEASTERERRLMEKLSESLKTMESQSA). The Histidine kinase domain maps to 373–614 (TMSHEIRSPL…TFTFILPYKV (242 aa)). Residue histidine 376 is modified to Phosphohistidine; by autocatalysis. 2 disordered regions span residues 620-639 (YSDDQDEFSDMADQQSEPDD) and 728-773 (NGRC…TEVK). Over residues 738 to 747 (SCSSSQASSE) the composition is skewed to low complexity. Residues 761–773 (SHREEEKAETEVK) are compositionally biased toward basic and acidic residues. Residues 779–921 (KILLVEDNKI…KLRECLQQYL (143 aa)) form the Response regulatory domain. The Mg(2+) site is built by aspartate 785, aspartate 828, and cysteine 830. Position 828 is a 4-aspartylphosphate (aspartate 828).

As to quaternary structure, interacts with AHP1, APH2, APH3, APH5 and APH6, but not with APH4. Present in light-grown but not in etiolated seedlings. Mostly expressed in roots flowers and siliques, and, to a lower extent, in stems and leaves, especially in guard cells.

It is found in the cell membrane. It localises to the cytoplasm. The catalysed reaction is ATP + protein L-histidine = ADP + protein N-phospho-L-histidine.. Its function is as follows. Functions as a histidine kinase and transmits the stress signal to a downstream MAPK cascade. This protein undergoes an ATP-dependent autophosphorylation at a conserved histidine residue in the kinase core, and a phosphoryl group is then transferred to a conserved aspartate residue in the receiver domain. Negative regulator of the ETR1-dependent abscisic acid (ABA) and ethylene signaling pathway that inhibits the root elongation. Promotes stomatal closure. Regulates stomatal opening by integrating multiple signals via hydrogen peroxide H(2)O(2) homeostasis in guard cells in an ABA-independent manner. May contribute to basal defense mechanisms by closing stomata in the presence of bacterial pathogens. Regulates both hormone levels and ROS production in response to stress. Required for full immunity to bacterial pathogen and necrotrophic fungus. In Arabidopsis thaliana (Mouse-ear cress), this protein is Histidine kinase 5 (AHK5).